We begin with the raw amino-acid sequence, 170 residues long: Alpha-crystallin A chain (170 aa).

Met-1 bears the N-acetylmethionine mark. Positions 1 to 63 (MDVTIQHPWF…RTALDSGISE (63 aa)) are required for complex formation with BFSP1 and BFSP2. Gln-6 bears the Deamidated glutamine; partial mark. Ser-45 bears the Phosphoserine mark. The residue at position 50 (Gln-50) is a Deamidated glutamine; partial. The sHSP domain maps to 52 to 161 (LFRTALDSGI…GERTIPVSRE (110 aa)). Lys-99 carries the post-translational modification N6-acetyllysine. Zn(2+) is bound at residue His-100. Asn-101 is subject to Deamidated asparagine; partial. Positions 102, 107, and 151 each coordinate Zn(2+). The disordered stretch occupies residues 144-170 (PKLVDPSHGERTIPVSREEKPSSAPSS). Basic and acidic residues predominate over residues 148–164 (DPSHGERTIPVSREEKP). Residue Ser-159 is glycosylated (O-linked (GlcNAc) serine).

It belongs to the small heat shock protein (HSP20) family. As to quaternary structure, heteromer composed of three CRYAA and one CRYAB subunits. Inter-subunit bridging via zinc ions enhances stability, which is crucial as there is no protein turn over in the lens. Can also form homodimers and homotetramers (dimers of dimers) which serve as the building blocks of homooligomers. Within homooligomers, the zinc-binding motif is created from residues of 3 different molecules. His-100 and Glu-102 from one molecule are ligands of the zinc ion, and His-107 and His-151 residues from additional molecules complete the site with tetrahedral coordination geometry. Part of a complex required for lens intermediate filament formation composed of BFSP1, BFSP2 and CRYAA. Acetylation at Lys-99 may increase chaperone activity. Post-translationally, undergoes age-dependent proteolytical cleavage at the C-terminus.

The protein localises to the cytoplasm. It localises to the nucleus. Functionally, contributes to the transparency and refractive index of the lens. Acts as a chaperone, preventing aggregation of various proteins under a wide range of stress conditions. Required for the correct formation of lens intermediate filaments as part of a complex composed of BFSP1, BFSP2 and CRYAA. This Tamandua mexicana (Northern Tamandua) protein is Alpha-crystallin A chain (CRYAA).